A 255-amino-acid chain; its full sequence is Endonuclease 8 2 (255 aa).

Catalysis depends on Pro2, which acts as the Schiff-base intermediate with DNA. Glu3 acts as the Proton donor in catalysis. Lys51 acts as the Proton donor; for beta-elimination activity in catalysis. The DNA site is built by Gln67 and Asn164. Residues 221-255 (WVYGRAGQGCRRCGTLIAYDTTDERVRYWCPACQR) form an FPG-type zinc finger. Arg245 functions as the Proton donor; for delta-elimination activity in the catalytic mechanism.

This sequence belongs to the FPG family. It depends on Zn(2+) as a cofactor.

The catalysed reaction is 2'-deoxyribonucleotide-(2'-deoxyribose 5'-phosphate)-2'-deoxyribonucleotide-DNA = a 3'-end 2'-deoxyribonucleotide-(2,3-dehydro-2,3-deoxyribose 5'-phosphate)-DNA + a 5'-end 5'-phospho-2'-deoxyribonucleoside-DNA + H(+). Its function is as follows. Involved in base excision repair of DNA damaged by oxidation or by mutagenic agents. Acts as a DNA glycosylase that recognizes and removes damaged bases. Has AP (apurinic/apyrimidinic) lyase activity and introduces nicks in the DNA strand. Cleaves the DNA backbone by beta-delta elimination to generate a single-strand break at the site of the removed base with both 3'- and 5'-phosphates. The protein is Endonuclease 8 2 (nei2) of Mycobacterium bovis (strain ATCC BAA-935 / AF2122/97).